The sequence spans 383 residues: Putative glutamate--cysteine ligase 2-1 (383 aa).

It belongs to the glutamate--cysteine ligase type 2 family. YbdK subfamily.

It catalyses the reaction L-cysteine + L-glutamate + ATP = gamma-L-glutamyl-L-cysteine + ADP + phosphate + H(+). Its function is as follows. ATP-dependent carboxylate-amine ligase which exhibits weak glutamate--cysteine ligase activity. This chain is Putative glutamate--cysteine ligase 2-1, found in Nocardia farcinica (strain IFM 10152).